Here is a 65-residue protein sequence, read N- to C-terminus: Muscarinic toxin-like protein 1 (65 aa).

Cystine bridges form between Cys-3–Cys-24, Cys-17–Cys-42, Cys-46–Cys-57, and Cys-58–Cys-63.

It belongs to the three-finger toxin family. Short-chain subfamily. Type C muscarinic toxin sub-subfamily. Monomer. Expressed by the venom gland.

The protein localises to the secreted. In terms of biological role, binds weakly to the muscarinic acetylcholine receptor (CHRM). This Naja kaouthia (Monocled cobra) protein is Muscarinic toxin-like protein 1.